The following is a 552-amino-acid chain: Chaperonin GroEL 1 (552 aa).

Residues 30-33 (TLGP), Lys51, 87-91 (DGTTT), Gly415, 479-481 (NAA), and Asp495 each bind ATP.

Belongs to the chaperonin (HSP60) family. As to quaternary structure, forms a cylinder of 14 subunits composed of two heptameric rings stacked back-to-back. Interacts with the co-chaperonin GroES.

It is found in the cytoplasm. The catalysed reaction is ATP + H2O + a folded polypeptide = ADP + phosphate + an unfolded polypeptide.. Together with its co-chaperonin GroES, plays an essential role in assisting protein folding. The GroEL-GroES system forms a nano-cage that allows encapsulation of the non-native substrate proteins and provides a physical environment optimized to promote and accelerate protein folding. In Albidiferax ferrireducens (strain ATCC BAA-621 / DSM 15236 / T118) (Rhodoferax ferrireducens), this protein is Chaperonin GroEL 1.